The sequence spans 402 residues: Phosphoglycerate kinase (402 aa).

Residues 24–26 (DFN), Arg40, 63–66 (HFGR), Arg122, and Arg155 contribute to the substrate site. Residues Lys206, Gly297, Glu328, and 357 to 360 (GGDS) contribute to the ATP site.

The protein belongs to the phosphoglycerate kinase family. In terms of assembly, monomer.

The protein localises to the cytoplasm. It catalyses the reaction (2R)-3-phosphoglycerate + ATP = (2R)-3-phospho-glyceroyl phosphate + ADP. The protein operates within carbohydrate degradation; glycolysis; pyruvate from D-glyceraldehyde 3-phosphate: step 2/5. The chain is Phosphoglycerate kinase from Parasynechococcus marenigrum (strain WH8102).